The primary structure comprises 105 residues: Large ribosomal subunit protein eL30 (105 aa).

The protein belongs to the eukaryotic ribosomal protein eL30 family.

This Candida glabrata (strain ATCC 2001 / BCRC 20586 / JCM 3761 / NBRC 0622 / NRRL Y-65 / CBS 138) (Yeast) protein is Large ribosomal subunit protein eL30 (RPL30).